Here is a 784-residue protein sequence, read N- to C-terminus: Homoaconitase, mitochondrial (784 aa).

Residues 1–32 (MIHPVRRALAVAASRAPRQFLAAASRTTSVRS) constitute a mitochondrion transit peptide. 3 residues coordinate [4Fe-4S] cluster: Cys399, Cys468, and Cys471. A disordered region spans residues 572 to 596 (EAGLTPESTSSSSSSSSSSEEESLT). Low complexity predominate over residues 578–589 (ESTSSSSSSSSS).

This sequence belongs to the aconitase/IPM isomerase family. The cofactor is [4Fe-4S] cluster.

It localises to the mitochondrion. It carries out the reaction (2R,3S)-homoisocitrate = cis-homoaconitate + H2O. Its pathway is amino-acid biosynthesis; L-lysine biosynthesis via AAA pathway; L-alpha-aminoadipate from 2-oxoglutarate: step 3/5. Its function is as follows. Catalyzes the reversible hydration of cis-homoaconitate to (2R,3S)-homoisocitrate, a step in the alpha-aminoadipate pathway for lysine biosynthesis. The protein is Homoaconitase, mitochondrial (lys-4) of Neurospora crassa (strain ATCC 24698 / 74-OR23-1A / CBS 708.71 / DSM 1257 / FGSC 987).